Here is a 948-residue protein sequence, read N- to C-terminus: UvrABC system protein A (948 aa).

33–40 serves as a coordination point for ATP; the sequence is GLSGSGKS. The C4-type zinc finger occupies 252 to 279; that stretch reads CPICGFSIGELEPRMFSFNSPFGACPTC. ABC transporter domains lie at 309-587 and 607-935; these read WIPT…KKSL and ASDR…KYLK. 639–646 contributes to the ATP binding site; that stretch reads GVSGSGKS. The C4-type zinc finger occupies 738–764; sequence CEACKGDGIIKIEMHFLPDVYVPCEVC.

The protein belongs to the ABC transporter superfamily. UvrA family. Forms a heterotetramer with UvrB during the search for lesions.

Its subcellular location is the cytoplasm. In terms of biological role, the UvrABC repair system catalyzes the recognition and processing of DNA lesions. UvrA is an ATPase and a DNA-binding protein. A damage recognition complex composed of 2 UvrA and 2 UvrB subunits scans DNA for abnormalities. When the presence of a lesion has been verified by UvrB, the UvrA molecules dissociate. The chain is UvrABC system protein A from Staphylococcus aureus (strain MSSA476).